The sequence spans 74 residues: Mu-Sparatoxin-Hp2 (74 aa).

An N-terminal signal peptide occupies residues 1–20 (MKIIVLMMMLFAAFSAVVLA). Residues 21–35 (DKSIEDAALDTVMDR) constitute a propeptide that is removed on maturation. 3 disulfide bridges follow: Cys42–Cys57, Cys49–Cys62, and Cys56–Cys66. Leu73 carries the post-translational modification Leucine amide.

As to expression, expressed by the venom gland.

The protein resides in the secreted. Its function is as follows. Weakly nhibits voltage-gated sodium channels Nav1.7/SCN9A. High concentration of the toxin (3 uM) inhibits Nav1.7/SCN9A currents by 80%. This Heteropoda pingtungensis (Pingtung huntsman spider) protein is Mu-Sparatoxin-Hp2.